The chain runs to 255 residues: tRNA uridine(34) hydroxylase (255 aa).

Residues 125–219 enclose the Rhodanese domain; sequence AAPDTLLIDT…YLEGIPESES (95 aa). The active-site Cysteine persulfide intermediate is cysteine 179.

This sequence belongs to the TrhO family.

The enzyme catalyses uridine(34) in tRNA + AH2 + O2 = 5-hydroxyuridine(34) in tRNA + A + H2O. Functionally, catalyzes oxygen-dependent 5-hydroxyuridine (ho5U) modification at position 34 in tRNAs. The protein is tRNA uridine(34) hydroxylase of Nitrobacter hamburgensis (strain DSM 10229 / NCIMB 13809 / X14).